Here is a 206-residue protein sequence, read N- to C-terminus: Thymidylate kinase (206 aa).

10–17 (GIDGAGKS) contributes to the ATP binding site.

Belongs to the thymidylate kinase family.

The enzyme catalyses dTMP + ATP = dTDP + ADP. Functionally, phosphorylation of dTMP to form dTDP in both de novo and salvage pathways of dTTP synthesis. The protein is Thymidylate kinase of Neisseria gonorrhoeae (strain ATCC 700825 / FA 1090).